A 332-amino-acid chain; its full sequence is Adenosine deaminase (332 aa).

Zn(2+) is bound by residues His12 and His14. The substrate site is built by His14, Asp16, and Gly170. His197 provides a ligand contact to Zn(2+). The active-site Proton donor is the Glu200. Position 278 (Asp278) interacts with Zn(2+). Asp279 provides a ligand contact to substrate.

Belongs to the metallo-dependent hydrolases superfamily. Adenosine and AMP deaminases family. Adenosine deaminase subfamily. Zn(2+) serves as cofactor.

It carries out the reaction adenosine + H2O + H(+) = inosine + NH4(+). It catalyses the reaction 2'-deoxyadenosine + H2O + H(+) = 2'-deoxyinosine + NH4(+). Functionally, catalyzes the hydrolytic deamination of adenosine and 2-deoxyadenosine. This Serratia proteamaculans (strain 568) protein is Adenosine deaminase.